A 467-amino-acid polypeptide reads, in one-letter code: Putative pentatricopeptide repeat-containing protein At1g10330 (467 aa).

PPR repeat units lie at residues 50-84 (TKCVYNTLIRSYLTTGEYKTSLALFTHMLASHVQP), 85-119 (NNLTFPSLIKAACSSFSVSYGVALHGQALKRGFLW), 120-150 (DPFVQTSFVRFYGEVGDLESSRKMFDDILNP), 151-181 (CVVACNSLLDACGRNGEMDYAFEYFQRMPVT), 182-216 (DVVSWTTVINGFSKKGLHAKALMVFGEMIQNERAV), 220-256 (NEATFVSVLSSCANFDQGGIRLGKQIHGYVMSKEIIL), 257-287 (TTTLGTALLDMYGKAGDLEMALTIFDQIRDK), 288-322 (KVCAWNAIISALASNGRPKQALEMFEMMKSSYVHP), 323-358 (NGITLLAILTACARSKLVDLGIQLFSSICSEYKIIP), and 359-389 (TSEHYGCVVDLIGRAGLLVDAANFIQSLPFE). A type E motif; degenerate region spans residues 394-467 (VLGALLGACK…RKIPAYSVLT (74 aa)).

Belongs to the PPR family. PCMP-E subfamily.

The chain is Putative pentatricopeptide repeat-containing protein At1g10330 (PCMP-E71) from Arabidopsis thaliana (Mouse-ear cress).